Consider the following 64-residue polypeptide: Defensin-like protein 123 (64 aa).

Cystine bridges form between Cys-19-Cys-62, Cys-29-Cys-49, Cys-34-Cys-56, and Cys-38-Cys-58.

Belongs to the DEFL family.

This Arabidopsis thaliana (Mouse-ear cress) protein is Defensin-like protein 123.